The chain runs to 341 residues: Fructose-1,6-bisphosphatase, cytosolic (341 aa).

Mg(2+) contacts are provided by Glu-71, Glu-100, Asp-121, Leu-123, and Asp-124. Substrate is bound by residues 124-127, Asn-215, Tyr-247, Tyr-267, and Lys-277; that span reads DGCS. Position 283 (Glu-283) interacts with Mg(2+).

Belongs to the FBPase class 1 family. Mg(2+) is required as a cofactor.

It localises to the cytoplasm. The enzyme catalyses beta-D-fructose 1,6-bisphosphate + H2O = beta-D-fructose 6-phosphate + phosphate. The polypeptide is Fructose-1,6-bisphosphatase, cytosolic (Beta vulgaris (Sugar beet)).